Reading from the N-terminus, the 69-residue chain is Small, acid-soluble spore protein C1 (69 aa).

Belongs to the alpha/beta-type SASP family.

In terms of biological role, SASP are bound to spore DNA. They are double-stranded DNA-binding proteins that cause DNA to change to an a-like conformation. They protect the DNA backbone from chemical and enzymatic cleavage and are thus involved in dormant spore's high resistance to UV light. The chain is Small, acid-soluble spore protein C1 (SASP-C1) from Priestia megaterium (Bacillus megaterium).